Consider the following 395-residue polypeptide: Selection and upkeep of intraepithelial T-cells protein 7 (395 aa).

Positions methionine 1–serine 25 are cleaved as a signal peptide. The Ig-like V-type domain maps to glutamate 26–threonine 141. Residues glutamate 26 to serine 248 lie on the Extracellular side of the membrane. An intrachain disulfide couples cysteine 49 to cysteine 123. N-linked (GlcNAc...) asparagine glycosylation is found at asparagine 92 and asparagine 139. Residues alanine 142–isoleucine 233 enclose the Ig-like C1-type domain. Cysteines 163 and 217 form a disulfide. A helical transmembrane segment spans residues leucine 249 to tryptophan 269. Over arginine 270–serine 287 the chain is Cytoplasmic. The chain crosses the membrane as a helical span at residues tryptophan 288–proline 308. The Extracellular portion of the chain corresponds to histidine 309–glutamate 329. The helical transmembrane segment at leucine 330–isoleucine 350 threads the bilayer. Residues glutamine 351–lysine 395 are Cytoplasmic-facing. Residues proline 371–lysine 395 form a disordered region.

It belongs to the SKINT family. In terms of tissue distribution, expressed in skin, thymus, testis and, to a lower extent, bladder.

It localises to the membrane. In terms of biological role, may act by engaging a cell surface molecule on immature T-cells in the embryonic thymus. The protein is Selection and upkeep of intraepithelial T-cells protein 7 (Skint7) of Mus musculus (Mouse).